A 340-amino-acid polypeptide reads, in one-letter code: Deubiquitinase SseL (340 aa).

Residue His-223 is part of the active site. Cys-285 acts as the Nucleophile in catalysis.

The protein belongs to the peptidase C79 family.

The protein localises to the secreted. It localises to the host cytoplasm. Effector proteins function to alter host cell physiology and promote bacterial survival in host tissues. This protease targets the host cell ubiquitin pathway by acting as a deubiquitinase in infected host cells. This is Deubiquitinase SseL (sseL) from Salmonella paratyphi A (strain ATCC 9150 / SARB42).